The chain runs to 220 residues: Ribonuclease P protein subunit p29 (220 aa).

Ser-10 is subject to Phosphoserine.

The protein belongs to the eukaryotic/archaeal RNase P protein component 1 family. Component of nuclear RNase P and RNase MRP ribonucleoproteins. RNase P consists of a catalytic RNA moiety and 10 different protein chains; POP1, POP4, POP5, POP7, RPP14, RPP21, RPP25, RPP30, RPP38 and RPP40. Within the RNase P complex, POP1, POP7 and RPP25 form the 'finger' subcomplex, POP5, RPP14, RPP40 and homodimeric RPP30 form the 'palm' subcomplex, and RPP21, POP4 and RPP38 form the 'wrist' subcomplex. All subunits of the RNase P complex interact with the catalytic RNA. Several subunits of RNase P are also part of the RNase MRP complex. RNase MRP consists of a catalytic RNA moiety and about 8 protein subunits; POP1, POP7, RPP25, RPP30, RPP38, RPP40 and possibly also POP4 and POP5.

It localises to the nucleus. Its subcellular location is the nucleolus. Its function is as follows. Component of ribonuclease P, a ribonucleoprotein complex that generates mature tRNA molecules by cleaving their 5'-ends. In Pongo abelii (Sumatran orangutan), this protein is Ribonuclease P protein subunit p29 (POP4).